The chain runs to 127 residues: uncharacterized protein (127 aa).

The segment at 1-34 is disordered; that stretch reads MKNPESSGVSSSPQIQRVSPSSSSTSPSPPSIGT. Low complexity predominate over residues 9-34; the sequence is VSSSPQIQRVSPSSSSTSPSPPSIGT. 2 consecutive transmembrane segments (helical) span residues 47-67 and 84-104; these read IAAV…PLAM and TIAV…YLLV.

The protein localises to the membrane. This is an uncharacterized protein from Saccharomyces cerevisiae (strain ATCC 204508 / S288c) (Baker's yeast).